A 148-amino-acid polypeptide reads, in one-letter code: Large ribosomal subunit protein uL22 (148 aa).

It belongs to the universal ribosomal protein uL22 family. Part of the 50S ribosomal subunit.

Its function is as follows. This protein binds specifically to 23S rRNA. It makes multiple contacts with different domains of the 23S rRNA in the assembled 50S subunit and ribosome. In terms of biological role, the globular domain of the protein is located near the polypeptide exit tunnel on the outside of the subunit, while an extended beta-hairpin is found that lines the wall of the exit tunnel in the center of the 70S ribosome. This chain is Large ribosomal subunit protein uL22, found in Thermoplasma volcanium (strain ATCC 51530 / DSM 4299 / JCM 9571 / NBRC 15438 / GSS1).